A 131-amino-acid polypeptide reads, in one-letter code: Squamosa promoter-binding-like protein 3 (131 aa).

The span at 1–17 (MSMRRSKAEGKRSLREL) shows a compositional bias: basic and acidic residues. Positions 1–54 (MSMRRSKAEGKRSLRELSEEEEEEEETEDEDTFEEEEALEKKQKGKATSSSGVC) are disordered. Positions 18-38 (SEEEEEEEETEDEDTFEEEEA) are enriched in acidic residues. The segment at 45 to 129 (GKATSSSGVC…GHNERRRKST (85 aa)) is sufficient and necessary for DNA binding. The SBP-type zinc-finger motif lies at 51 to 128 (SGVCQVESCT…AGHNERRRKS (78 aa)). Cysteine 54, cysteine 59, cysteine 76, histidine 79, cysteine 95, cysteine 98, histidine 102, and cysteine 114 together coordinate Zn(2+). Residues 111–127 (KRSCRRRLAGHNERRRK) carry the Bipartite nuclear localization signal motif.

Zn(2+) serves as cofactor. As to expression, expressed in vegetative and inflorescence apical meristems, floral meristems, leaf and flower organ primordia, inflorescence stem tissue and to lower extent in roots.

It is found in the nucleus. The protein resides in the cytoplasm. Its function is as follows. Trans-acting factor that binds specifically to the consensus nucleotide sequence 5'-TNCGTACAA-3' of AP1 promoter. Binds specifically to the 5'-GTAC-3' core sequence. Promotes both vegetative phase change and flowering. Regulates phase-specific patterns of leaf epidermal differentiation and flowering time, but does not seem to affect leaf shape. This is Squamosa promoter-binding-like protein 3 (SPL3) from Arabidopsis thaliana (Mouse-ear cress).